A 520-amino-acid chain; its full sequence is MTMWQFKSYFKHHLVFWKDRFLHSSEKQMQRRSILSSVVLIILSFLISFLLIISIPGGRGASFFALFTKLFLDNTNTENFLRQIAIYILAGLAFSFCMSVGIFNIGISGQMMAGAIFGFLMILKVFPSSFRPGFGGQIITVLLMVIGSVSVAVVVATLKIFFKVNEVVSAIMLNWIVVLISAYLVETYIKDNSGGTAQFFSLPLPDEFALYNFSPLTKKFGWLASLIIAFISVIIVAVVLKYTVFGHKLKSIGSSVFGSQAMGFNVRKYQFLSFIISGILSGLLATVVYTASTEKVLTFNNVGDSAISAVPATGFDGIAIGLIALNNPFRIVIVSVLIAFVNIGARPANLNPNTASLVLGIMMYFAALYNLMVYFKPWRYLVKLNIGKINLTTYETYENKLAANLEWLSFQRFLSKQKKKNDKTKFNWFDTSLFEQYAKNKQEIVQEYHHNCATNLIAWWLNAIQSGNIKPSTTFKLEFVNFKHQQKFVLNWFKNESESLRDFQSQFERINKLVEREFVK.

A run of 9 helical transmembrane segments spans residues 38 to 58, 84 to 104, 105 to 125, 138 to 158, 167 to 187, 220 to 240, 271 to 291, 318 to 338, and 355 to 375; these read VVLIILSFLISFLLIISIPGG, IAIYILAGLAFSFCMSVGIFN, IGISGQMMAGAIFGFLMILKV, IITVLLMVIGSVSVAVVVATL, VVSAIMLNWIVVLISAYLVET, FGWLASLIIAFISVIIVAVVL, FLSFIISGILSGLLATVVYTA, IAIGLIALNNPFRIVIVSVLI, and ASLVLGIMMYFAALYNLMVYF.

Its subcellular location is the cell membrane. This is an uncharacterized protein from Mycoplasma genitalium (strain ATCC 33530 / DSM 19775 / NCTC 10195 / G37) (Mycoplasmoides genitalium).